A 506-amino-acid polypeptide reads, in one-letter code: Cobyric acid synthase (506 aa).

The region spanning 251 to 448 (DITIAIVQLP…LHGLFDSDAF (198 aa)) is the GATase cobBQ-type domain. The active-site Nucleophile is Cys332. His440 is a catalytic residue.

This sequence belongs to the CobB/CobQ family. CobQ subfamily.

The protein operates within cofactor biosynthesis; adenosylcobalamin biosynthesis. Its function is as follows. Catalyzes amidations at positions B, D, E, and G on adenosylcobyrinic A,C-diamide. NH(2) groups are provided by glutamine, and one molecule of ATP is hydrogenolyzed for each amidation. This chain is Cobyric acid synthase, found in Salmonella dublin (strain CT_02021853).